The primary structure comprises 409 residues: N-acetylglucosamine-6-phosphate deacetylase (409 aa).

Glutamate 143 provides a ligand contact to a divalent metal cation. Residue 154–155 (AH) coordinates substrate. Residues histidine 211 and histidine 232 each contribute to the a divalent metal cation site. Residues 235–236 (NA), arginine 243, and 269–272 (DGIH) contribute to the substrate site. Catalysis depends on aspartate 294, which acts as the Proton donor/acceptor. Substrate is bound at residue 328–330 (LSG).

This sequence belongs to the metallo-dependent hydrolases superfamily. NagA family. A divalent metal cation serves as cofactor.

It catalyses the reaction N-acetyl-D-glucosamine 6-phosphate + H2O = D-glucosamine 6-phosphate + acetate. Its pathway is amino-sugar metabolism; N-acetylneuraminate degradation. In terms of biological role, hydrolyzes the N-glycolyl group from N-glycolylglucosamine 6-phosphate (GlcNGc-6-P) in the N-glycolylneuraminic acid (Neu5Gc) degradation pathway. The protein is N-acetylglucosamine-6-phosphate deacetylase (Amdhd2) of Rattus norvegicus (Rat).